We begin with the raw amino-acid sequence, 358 residues long: tRNA-specific 2-thiouridylase MnmA (358 aa).

ATP is bound by residues 6-13 (AMSGGVDS) and leucine 32. The active-site Nucleophile is the cysteine 101. The cysteines at positions 101 and 193 are disulfide-linked. Glycine 125 serves as a coordination point for ATP. The segment at 143–145 (KDQ) is interaction with tRNA. Cysteine 193 (cysteine persulfide intermediate) is an active-site residue.

It belongs to the MnmA/TRMU family.

It localises to the cytoplasm. It catalyses the reaction S-sulfanyl-L-cysteinyl-[protein] + uridine(34) in tRNA + AH2 + ATP = 2-thiouridine(34) in tRNA + L-cysteinyl-[protein] + A + AMP + diphosphate + H(+). In terms of biological role, catalyzes the 2-thiolation of uridine at the wobble position (U34) of tRNA, leading to the formation of s(2)U34. This chain is tRNA-specific 2-thiouridylase MnmA, found in Mycobacterium avium (strain 104).